Here is a 746-residue protein sequence, read N- to C-terminus: MLGDSRDLFRPKTSDIPAKPGVYKWRDGEGRVIYVGKAKNLRNRLTNYFQPLYLLHPRTQTMVLTARSLEWTVVATELESLTLEYTWIKEFDPRFNVQFRDDKTYPYLAVSTGERIPRVWVTRSRKRRDTRYFGPYAKVWELRHSLDRLLRTFPVRTCTTNVFHKAQLTGRPCLFASIGKCSAPCVNRIEADEHRRLCEQLVGVMTGRLGRPYIAQLTRDMKEASAELEFEKAARLRDQIQMLETVVQQNAVVFDQDVDADVFGFASDELEASVHAFYVRAGSIRGERNWSVERVEDIDDADLMADLLVQVYSDAAGDNHPQSAATISTNREAIGSTQTITATDAVARAQATRERNTRQETTGRADLLAPIAPVPREIIVPVEPARREELEGWLTNLRGGAVTIRVASRGDKKQLMDRANENASQALQRSKMSRISDMGARTQAMNDVAKALGLAEAPLRIECYDISNTVGGAFQVASMVVFEDAIAKKSEYRRFAIRGKDGKGAVDDLSALYETLTRRFKHGNIAGDSGESIDAEQRVASAAGKMTTAVAAETIAANGNDNGEGGSDISGKGHAVPVGVQNDARESPPDIVQQNTNRHHFAYKPNLVVVDGGKPQVMAAAKALEDCGVNDVAVCGLAKRLEEVWVPDDDYPIILKRQSEGMYLLQRVRDESHRFAITYHRQQRRKGALRSALDEIPGIGESYQKRLLNHFGSVKAMREASVEDFEKVKGIGHAKAEALYTALHEQ.

The region spanning 18–97 (AKPGVYKWRD…IKEFDPRFNV (80 aa)) is the GIY-YIG domain. One can recognise a UVR domain in the interval 211–246 (RPYIAQLTRDMKEASAELEFEKAARLRDQIQMLETV). Residues 557–577 (ANGNDNGEGGSDISGKGHAVP) form a disordered region.

This sequence belongs to the UvrC family. In terms of assembly, interacts with UvrB in an incision complex.

It localises to the cytoplasm. Functionally, the UvrABC repair system catalyzes the recognition and processing of DNA lesions. UvrC both incises the 5' and 3' sides of the lesion. The N-terminal half is responsible for the 3' incision and the C-terminal half is responsible for the 5' incision. The protein is UvrABC system protein C of Bifidobacterium longum (strain DJO10A).